A 103-amino-acid polypeptide reads, in one-letter code: MKFKTGDKVRVMRGKDAGKEGQITKVLKDADKVVVEGINMIKKHQKPNNANPQGGIIDKEAPIHVSNVMLLDPDTNKPTRIGSEVKDGNKVRIAKKSGTAIDK.

Belongs to the universal ribosomal protein uL24 family. In terms of assembly, part of the 50S ribosomal subunit.

One of two assembly initiator proteins, it binds directly to the 5'-end of the 23S rRNA, where it nucleates assembly of the 50S subunit. In terms of biological role, one of the proteins that surrounds the polypeptide exit tunnel on the outside of the subunit. This chain is Large ribosomal subunit protein uL24, found in Lacticaseibacillus casei (strain BL23) (Lactobacillus casei).